The chain runs to 800 residues: Phenylalanine--tRNA ligase beta subunit (800 aa).

The tRNA-binding domain occupies 39–154 (SKDIKNLVVG…TEVEPGTDAL (116 aa)). The B5 domain maps to 408–483 (SFVTPIDITA…RIYGYDEIPS (76 aa)). Asp-461, Asp-467, Glu-470, and Glu-471 together coordinate Mg(2+). The FDX-ACB domain maps to 708–800 (PKFPGVTRDI…ALQAQGATIR (93 aa)).

The protein belongs to the phenylalanyl-tRNA synthetase beta subunit family. Type 1 subfamily. In terms of assembly, tetramer of two alpha and two beta subunits. The cofactor is Mg(2+).

It is found in the cytoplasm. The enzyme catalyses tRNA(Phe) + L-phenylalanine + ATP = L-phenylalanyl-tRNA(Phe) + AMP + diphosphate + H(+). In Staphylococcus haemolyticus (strain JCSC1435), this protein is Phenylalanine--tRNA ligase beta subunit.